Reading from the N-terminus, the 325-residue chain is Fructose-1,6-bisphosphatase class 1 (325 aa).

Mg(2+)-binding residues include Glu84, Asp103, Leu105, and Asp106. Substrate contacts are provided by residues 106–109 (DGSS), Asn196, and Lys262. Glu268 serves as a coordination point for Mg(2+).

Belongs to the FBPase class 1 family. Homotetramer. Requires Mg(2+) as cofactor.

The protein resides in the cytoplasm. The enzyme catalyses beta-D-fructose 1,6-bisphosphate + H2O = beta-D-fructose 6-phosphate + phosphate. Its pathway is carbohydrate biosynthesis; gluconeogenesis. This chain is Fructose-1,6-bisphosphatase class 1, found in Shewanella baltica (strain OS195).